The sequence spans 452 residues: Probable cysteine protease RD21C (452 aa).

The N-terminal stretch at Met-1–Ala-29 is a signal peptide. Residues Thr-30–Ser-128 constitute a propeptide, activation peptide. A glycan (N-linked (GlcNAc...) asparagine) is linked at Asn-82. 5 disulfides stabilise this stretch: Cys-150/Cys-192, Cys-184/Cys-226, Cys-284/Cys-335, Cys-363/Cys-375, and Cys-369/Cys-390. Cys-153 is an active-site residue. Active-site residues include His-290 and Asn-310. A propeptide spans Lys-346 to Ala-452 (removed in mature form).

It belongs to the peptidase C1 family. Interacts with WSCP.

Probable thiol protease. The chain is Probable cysteine protease RD21C from Arabidopsis thaliana (Mouse-ear cress).